The following is a 134-amino-acid chain: Small ribosomal subunit protein bS6 (134 aa).

Residues 113–122 are compositionally biased toward basic and acidic residues; that stretch reads NRDIKEKEQP. Positions 113–134 are disordered; it reads NRDIKEKEQPSESNVDADLKVN.

Belongs to the bacterial ribosomal protein bS6 family.

In terms of biological role, binds together with bS18 to 16S ribosomal RNA. The polypeptide is Small ribosomal subunit protein bS6 (Borrelia duttonii (strain Ly)).